The primary structure comprises 398 residues: Enoate reductase 1 (398 aa).

FMN is bound by residues Thr37 and His191. Substrate is bound by residues His191 and Asn194. Tyr196 serves as the catalytic Proton donor. 2 residues coordinate FMN: Arg243 and Arg348. Position 375 (Tyr375) interacts with substrate.

This sequence belongs to the NADH:flavin oxidoreductase/NADH oxidase family. In terms of assembly, homodimer or heterodimer. FMN serves as cofactor.

It catalyses the reaction butanoate + NAD(+) = (2E)-2-butenoate + NADH + H(+). Its function is as follows. Enoate reductase with broad substrate specificity for different alpha,beta-unsaturated carbonyl compounds. Prefers NADPH over NADH as cofactor. This Kluyveromyces lactis (strain ATCC 8585 / CBS 2359 / DSM 70799 / NBRC 1267 / NRRL Y-1140 / WM37) (Yeast) protein is Enoate reductase 1 (KYE1).